Reading from the N-terminus, the 453-residue chain is V-type proton ATPase subunit B (453 aa).

Arginine 341 serves as a coordination point for ATP.

Belongs to the ATPase alpha/beta chains family. V-ATPase is a heteromultimeric enzyme made up of two complexes: the ATP-hydrolytic V1 complex and the proton translocation V0 complex. The V1 complex consists of three catalytic AB heterodimers that form a heterohexamer, three peripheral stalks each consisting of EG heterodimers, one central rotor including subunits D and F, and the regulatory subunits C and H. The proton translocation complex V0 consists of the proton transport subunit a, a ring of proteolipid subunits c9c'', rotary subunit d, subunits e and f, and two accessory subunits.

Its function is as follows. Non-catalytic subunit of the V1 complex of vacuolar(H+)-ATPase (V-ATPase), a multisubunit enzyme composed of a peripheral complex (V1) that hydrolyzes ATP and a membrane integral complex (V0) that translocates protons. V-ATPase is responsible for acidifying and maintaining the pH of intracellular compartments and in some cell types, is targeted to the plasma membrane, where it is responsible for acidifying the extracellular environment. Essential for the proper assembly and activity of V-ATPase. The polypeptide is V-type proton ATPase subunit B (ATP6V1B) (Gallus gallus (Chicken)).